The chain runs to 528 residues: Phenylalanine--tRNA ligase alpha subunit (528 aa).

Threonine 365 and phenylalanine 444 together coordinate L-phenylalanine. Residue glutamate 446 participates in Mg(2+) binding. Phenylalanine 469 lines the L-phenylalanine pocket.

It belongs to the class-II aminoacyl-tRNA synthetase family. Phe-tRNA synthetase alpha subunit type 2 subfamily. In terms of assembly, tetramer of two alpha and two beta subunits. Mg(2+) serves as cofactor.

Its subcellular location is the cytoplasm. It carries out the reaction tRNA(Phe) + L-phenylalanine + ATP = L-phenylalanyl-tRNA(Phe) + AMP + diphosphate + H(+). In Borreliella burgdorferi (strain ATCC 35210 / DSM 4680 / CIP 102532 / B31) (Borrelia burgdorferi), this protein is Phenylalanine--tRNA ligase alpha subunit.